A 219-amino-acid chain; its full sequence is Ribosomal RNA small subunit methyltransferase G (219 aa).

Residues Gly78, Phe83, 129–130 (GE), and Arg146 each bind S-adenosyl-L-methionine.

Belongs to the methyltransferase superfamily. RNA methyltransferase RsmG family.

The protein localises to the cytoplasm. It carries out the reaction guanosine(527) in 16S rRNA + S-adenosyl-L-methionine = N(7)-methylguanosine(527) in 16S rRNA + S-adenosyl-L-homocysteine. In terms of biological role, specifically methylates the N7 position of guanine in position 527 of 16S rRNA. The polypeptide is Ribosomal RNA small subunit methyltransferase G (Geotalea uraniireducens (strain Rf4) (Geobacter uraniireducens)).